A 1400-amino-acid polypeptide reads, in one-letter code: DNA-directed RNA polymerase subunit beta' (1400 aa).

Residues C71, C73, C86, and C89 each coordinate Zn(2+). Positions 462, 464, and 466 each coordinate Mg(2+). 4 residues coordinate Zn(2+): C811, C885, C892, and C895.

Belongs to the RNA polymerase beta' chain family. The RNAP catalytic core consists of 2 alpha, 1 beta, 1 beta' and 1 omega subunit. When a sigma factor is associated with the core the holoenzyme is formed, which can initiate transcription. The cofactor is Mg(2+). Zn(2+) is required as a cofactor.

It carries out the reaction RNA(n) + a ribonucleoside 5'-triphosphate = RNA(n+1) + diphosphate. Functionally, DNA-dependent RNA polymerase catalyzes the transcription of DNA into RNA using the four ribonucleoside triphosphates as substrates. The sequence is that of DNA-directed RNA polymerase subunit beta' from Brucella suis biovar 1 (strain 1330).